A 191-amino-acid polypeptide reads, in one-letter code: Adenine phosphoribosyltransferase 5 (191 aa).

The protein belongs to the purine/pyrimidine phosphoribosyltransferase family. In terms of assembly, homodimer.

The protein resides in the cytoplasm. The enzyme catalyses AMP + diphosphate = 5-phospho-alpha-D-ribose 1-diphosphate + adenine. The protein operates within purine metabolism; AMP biosynthesis via salvage pathway; AMP from adenine: step 1/1. Catalyzes a salvage reaction resulting in the formation of AMP, that is energically less costly than de novo synthesis. May contribute to the recycling of adenine into adenylate nucleotides and the inactivation of cytokinins by phosphoribosylation. Possesses low activity toward adenine, but can efficiently convert cytokinins from free bases (active form) to the corresponding nucleotides (inactive form). This chain is Adenine phosphoribosyltransferase 5 (APT5), found in Arabidopsis thaliana (Mouse-ear cress).